Reading from the N-terminus, the 339-residue chain is Starvation-sensing protein RspB (339 aa).

The Zn(2+) site is built by Cys37, His59, Cys89, Cys92, Cys95, Cys103, and Glu144.

This sequence belongs to the zinc-containing alcohol dehydrogenase family. Zn(2+) is required as a cofactor.

Its function is as follows. Not known; probable catabolic enzyme. The polypeptide is Starvation-sensing protein RspB (Escherichia coli (strain K12)).